Reading from the N-terminus, the 474-residue chain is TOM1-like protein 1 (474 aa).

The VHS domain occupies 22–154; that stretch reads ATFAGVLTED…DLLKKGVQFP (133 aa). The interval 153–180 is disordered; sequence FPPSDGEPETRQEAGQISPNRPTSVPTA. Residues 165–178 show a composition bias toward polar residues; that stretch reads EAGQISPNRPTSVP. Position 170 is a phosphoserine (serine 170). One can recognise a GAT domain in the interval 199-287; it reads EQIGKLHSEL…AVLGYERFTR (89 aa). The tract at residues 291–317 is disordered; sequence RLLEQKRNRTEATRTSSEPSAPSCDLL. The segment covering 293 to 302 has biased composition (basic and acidic residues); it reads LEQKRNRTEA. Phosphoserine occurs at positions 313 and 320. An interaction with GRB2 region spans residues 392–395; sequence YDNF. Residues 420–424 carry the SH3-binding motif; that stretch reads LPPLP. The interaction with PIK3R1 stretch occupies residues 441–444; the sequence is YEVM. Tyrosine 457 is modified (phosphotyrosine). An SH2-binding motif is present at residues 457–460; the sequence is YEEI.

It belongs to the TOM1 family. In terms of assembly, interacts with LYN. Interacts with the SH2 and SH3 domains of FYN when phosphorylated. Also interacts with GRB2 and PIK3R1 when phosphorylated. In terms of processing, phosphorylated on tyrosines by LYN. Phosphorylated on tyrosines by FYN. As to expression, strongly expressed in brain and kidney, expressed at intermediate levels skin and heart, and weakly expressed in thymus. Not expressed in liver and spleen.

The protein localises to the golgi apparatus. Its subcellular location is the golgi stack. The protein resides in the endosome membrane. It is found in the cytoplasm. It localises to the membrane. Its function is as follows. Probable adapter protein involved in signaling pathways. Interacts with the SH2 and SH3 domains of various signaling proteins when it is phosphorylated. May promote FYN activation, possibly by disrupting intramolecular SH3-dependent interactions. In Mus musculus (Mouse), this protein is TOM1-like protein 1 (Tom1l1).